We begin with the raw amino-acid sequence, 990 residues long: Chondroitin sulfate ABC exolyase (990 aa).

Histidine 453 functions as the Proton acceptor in the catalytic mechanism. Tyrosine 460 (proton donor) is an active-site residue.

It belongs to the polysaccharide lyase 8 family.

It carries out the reaction Exolytic removal of Delta(4)-unsaturated disaccharide residues from the non-reducing ends of both polymeric chondroitin/dermatan sulfates and their oligosaccharide fragments.. Its activity is regulated as follows. Inhibited by Zn(2+), whereas Ni(2+), Fe(2+), and Cu(2+) have little or no effect on activity. Broad-specificity glycosaminoglycan lyase, which acts in an exolytic fashion, and preferentially degrades the tetra- and hexasaccharide derivatives of chondroitin sulfate and dermatan sulfate produced by the chondroitin sulfate ABC endolyase, to yield the respective disaccharides. To a lesser extent, is also able to split off disaccharide residues directly from polymeric chondroitin 4- and 6-sulfate, dermatan sulfate, chondroitin, and hyaluronan. Is not active against keratan sulfate, heparan sulfate, and heparin. The protein is Chondroitin sulfate ABC exolyase (ChABCII) of Proteus vulgaris.